The chain runs to 311 residues: Thioredoxin reductase (311 aa).

35 to 42 is a binding site for FAD; it reads ERGIPGGQ. Cys134 and Cys137 are oxidised to a cystine. Residue 277 to 286 participates in FAD binding; the sequence is DVRDKGLRQI.

The protein belongs to the class-II pyridine nucleotide-disulfide oxidoreductase family. In terms of assembly, homodimer. It depends on FAD as a cofactor.

It is found in the cytoplasm. The catalysed reaction is [thioredoxin]-dithiol + NADP(+) = [thioredoxin]-disulfide + NADPH + H(+). The protein is Thioredoxin reductase (trxB) of Staphylococcus aureus (strain COL).